We begin with the raw amino-acid sequence, 430 residues long: Tol-Pal system protein TolB (430 aa).

Positions 1-21 are cleaved as a signal peptide; it reads MKQAFRVALGFLVLWASVLHA.

Belongs to the TolB family. In terms of assembly, the Tol-Pal system is composed of five core proteins: the inner membrane proteins TolA, TolQ and TolR, the periplasmic protein TolB and the outer membrane protein Pal. They form a network linking the inner and outer membranes and the peptidoglycan layer.

It is found in the periplasm. Part of the Tol-Pal system, which plays a role in outer membrane invagination during cell division and is important for maintaining outer membrane integrity. TolB occupies a key intermediary position in the Tol-Pal system because it communicates directly with both membrane-embedded components, Pal in the outer membrane and TolA in the inner membrane. This is Tol-Pal system protein TolB from Yersinia pestis.